The chain runs to 244 residues: Securin-like protein (244 aa).

The tract at residues 31-53 (ELEKTPSRGGLGLVVNSSKTPGG) is disordered.

As to quaternary structure, forms a complex (via C-terminus) with separase sep-1. Interaction with ify-1 stabilizes sep-1. Also maintains the complex in the cytoplasm during interphase and recruits it to chromosomes during the first meiotic division. Interacts with E3 ubiquitin-protein ligase etc-1. Post-translationally, ubiquitinated by etc-1 likely at the onset of anaphase, resulting in its degradation. In terms of tissue distribution, expressed in germ cells including oocytes.

It is found in the cytoplasm. The protein resides in the chromosome. The protein localises to the cytoskeleton. It localises to the spindle. Functionally, acts as a chaperone and as an inhibitor for separase sep-1. Plays an essential role in maintaining chromosome cohesion prior to meiotic and mitotic anaphase, in cytokinesis and in organizing the spindle and the centrosome. Ubiquitination-dependent degradation at the onset of anaphase is likely to activate sep-1 resulting in the proteolysis of the cohesin complex and the subsequent segregation of the chromosomes. Also required for cortical granule exocytosis. The sequence is that of Securin-like protein from Caenorhabditis elegans.